Reading from the N-terminus, the 424-residue chain is Deoxyguanosinetriphosphate triphosphohydrolase-like protein (424 aa).

Positions 1–24 (MYPYSDADAFRRHPERAKSSQLRT) are disordered. The span at 8–18 (DAFRRHPERAK) shows a compositional bias: basic and acidic residues. Residues 67–217 (RLTHSLEVAQ…MDFSDDIAYS (151 aa)) form the HD domain.

The protein belongs to the dGTPase family. Type 2 subfamily.

The chain is Deoxyguanosinetriphosphate triphosphohydrolase-like protein from Corynebacterium glutamicum (strain R).